Here is a 290-residue protein sequence, read N- to C-terminus: Probable aquaporin PIP2-1 (290 aa).

2 consecutive transmembrane segments (helical) span residues alanine 43–isoleucine 63 and cysteine 80–valine 100. Residues asparagine 112–alanine 114 carry the NPA 1 motif. Helical transmembrane passes span isoleucine 131 to phenylalanine 151, glycine 173 to alanine 193, and valine 207 to isoleucine 227. The NPA 2 motif lies at asparagine 233–alanine 235. The chain crosses the membrane as a helical span at residues isoleucine 255–leucine 275.

It belongs to the MIP/aquaporin (TC 1.A.8) family. PIP (TC 1.A.8.11) subfamily. In terms of tissue distribution, expressed in roots, leaves and anthers.

The protein resides in the cell membrane. Functionally, aquaporins facilitate the transport of water and small neutral solutes across cell membranes. This is Probable aquaporin PIP2-1 (PIP2-1) from Oryza sativa subsp. japonica (Rice).